The sequence spans 131 residues: Small ribosomal subunit protein uS8 (131 aa).

This sequence belongs to the universal ribosomal protein uS8 family. In terms of assembly, part of the 30S ribosomal subunit. Contacts proteins S5 and S12.

One of the primary rRNA binding proteins, it binds directly to 16S rRNA central domain where it helps coordinate assembly of the platform of the 30S subunit. The chain is Small ribosomal subunit protein uS8 from Chlorobium chlorochromatii (strain CaD3).